The sequence spans 187 residues: Large ribosomal subunit protein uL5 (187 aa).

This sequence belongs to the universal ribosomal protein uL5 family. In terms of assembly, part of the 50S ribosomal subunit; part of the 5S rRNA/L5/L18/L25 subcomplex. Contacts the 5S rRNA and the P site tRNA. Forms a bridge to the 30S subunit in the 70S ribosome.

Its function is as follows. This is one of the proteins that bind and probably mediate the attachment of the 5S RNA into the large ribosomal subunit, where it forms part of the central protuberance. In the 70S ribosome it contacts protein S13 of the 30S subunit (bridge B1b), connecting the 2 subunits; this bridge is implicated in subunit movement. Contacts the P site tRNA; the 5S rRNA and some of its associated proteins might help stabilize positioning of ribosome-bound tRNAs. This is Large ribosomal subunit protein uL5 from Mycolicibacterium paratuberculosis (strain ATCC BAA-968 / K-10) (Mycobacterium paratuberculosis).